Consider the following 407-residue polypeptide: DAZ-associated protein 1 (407 aa).

Position 1 is an N-acetylmethionine (Met-1). RRM domains are found at residues 10 to 97 and 113 to 190; these read GKLF…RTRP and NKIF…RAEP. The tract at residues 74 to 117 is disordered; it reads TLDGRNIDPKPCTPRGMQPERTRPKEGWQKGPRSDNSKSNKIFV. The span at 91-111 shows a compositional bias: basic and acidic residues; the sequence is QPERTRPKEGWQKGPRSDNSK. Lys-150 is subject to N6-acetyllysine. The segment covering 185-194 has biased composition (basic and acidic residues); that stretch reads VKRAEPRDSK. Residues 185-407 are disordered; sequence VKRAEPRDSK…NVQGFHPYRR (223 aa). Residues 195–207 are compositionally biased toward polar residues; the sequence is SQAPGQPGASQWG. Over residues 247-262 the composition is skewed to pro residues; that stretch reads GPPPAGRGAPPPPPPF. Position 253 is an omega-N-methylarginine (Arg-253). Positions 280–294 are enriched in low complexity; sequence FPQGYGAPPQFSFGY. The segment covering 295–315 has biased composition (pro residues); that stretch reads GPPPPPPDQFAPPGVPPPPAT. Low complexity predominate over residues 364 to 379; the sequence is SDPSQQPPSYGGPSVP. Over residues 380 to 393 the composition is skewed to gly residues; it reads GSGGPPAGGSGFGR.

In terms of assembly, interacts with DAZ and DAZL. In terms of processing, acetylation at Lys-150 is predominantly observed in the nuclear fraction, and may regulate nucleocytoplasmic transport. As to expression, mainly expressed in testis. Expressed to a lower level in thymus. Weakly or not expressed in heart, liver, brain, placenta, lung, skeletal muscle, kidney and pancreas.

Its subcellular location is the cytoplasm. The protein resides in the nucleus. RNA-binding protein, which may be required during spermatogenesis. This is DAZ-associated protein 1 (DAZAP1) from Homo sapiens (Human).